Consider the following 459-residue polypeptide: Cysteine--tRNA ligase (459 aa).

Cysteine 27 is a Zn(2+) binding site. The short motif at isoleucine 29–histidine 39 is the 'HIGH' region element. Cysteine 208, histidine 233, and glutamate 237 together coordinate Zn(2+). A 'KMSKS' region motif is present at residues lysine 265–serine 269. Position 268 (lysine 268) interacts with ATP.

This sequence belongs to the class-I aminoacyl-tRNA synthetase family. Monomer. Requires Zn(2+) as cofactor.

It is found in the cytoplasm. It catalyses the reaction tRNA(Cys) + L-cysteine + ATP = L-cysteinyl-tRNA(Cys) + AMP + diphosphate. This Francisella philomiragia subsp. philomiragia (strain ATCC 25017 / CCUG 19701 / FSC 153 / O#319-036) protein is Cysteine--tRNA ligase.